A 300-amino-acid polypeptide reads, in one-letter code: Protein YIF1B (300 aa).

Residues 1–46 (MNQESSFRAPPKRRVRGPNPNISTPHQLFDDTSGGPVPHGGEYPNH) form a disordered region. Topologically, residues 1-142 (MNQESSFRAP…APRFDINAPD (142 aa)) are cytoplasmic. A helical membrane pass occupies residues 143-163 (LYIPVMAFITYILVAGLALGT). Residues 164–178 (QSRFSPEILGMQASS) are Extracellular-facing. The helical transmembrane segment at 179–199 (ALAWLIVEVLAILLSLYLVTV) threads the bilayer. Residues 200–205 (NTDLTT) are Cytoplasmic-facing. Residues 206-226 (VDLVAFSGYKYVGMISGVISG) form a helical membrane-spanning segment. Position 227 (Leu227) is a topological domain, extracellular. Residues 228 to 248 (LFGKTGYYVVLSWCGISVVFF) form a helical membrane-spanning segment. Residues 249–278 (MIRTLRLKILSEAAAEGVLVRGARNQLRMY) are Cytoplasmic-facing. A helical transmembrane segment spans residues 279 to 299 (LTMAIAAVQPIFMYWLTYHLV). A topological domain (extracellular) is located at residue Arg300.

Belongs to the YIF1 family.

The protein resides in the endoplasmic reticulum membrane. Its subcellular location is the golgi apparatus membrane. The protein localises to the endoplasmic reticulum-Golgi intermediate compartment membrane. Functions in endoplasmic reticulum to Golgi vesicle-mediated transport and regulates the proper organization of the endoplasmic reticulum and the Golgi. Plays a key role in targeting to neuronal dendrites receptors such as HTR1A. Plays also a role in primary cilium and sperm flagellum assembly probably through protein transport to these compartments. The chain is Protein YIF1B (yif1b) from Xenopus tropicalis (Western clawed frog).